The following is a 102-amino-acid chain: NADH-quinone oxidoreductase subunit K (102 aa).

3 helical membrane-spanning segments follow: residues 5–25 (LSHY…GIFL), 31–51 (IVIL…MVAF), and 65–85 (LFIL…LVVF).

Belongs to the complex I subunit 4L family. In terms of assembly, NDH-1 is composed of 14 different subunits. Subunits NuoA, H, J, K, L, M, N constitute the membrane sector of the complex.

The protein resides in the cell inner membrane. The catalysed reaction is a quinone + NADH + 5 H(+)(in) = a quinol + NAD(+) + 4 H(+)(out). In terms of biological role, NDH-1 shuttles electrons from NADH, via FMN and iron-sulfur (Fe-S) centers, to quinones in the respiratory chain. The immediate electron acceptor for the enzyme in this species is believed to be ubiquinone. Couples the redox reaction to proton translocation (for every two electrons transferred, four hydrogen ions are translocated across the cytoplasmic membrane), and thus conserves the redox energy in a proton gradient. The polypeptide is NADH-quinone oxidoreductase subunit K (Rhizobium johnstonii (strain DSM 114642 / LMG 32736 / 3841) (Rhizobium leguminosarum bv. viciae)).